The following is a 433-amino-acid chain: Alpha-(1,3)-fucosyltransferase fut-1 (433 aa).

Residues 1-12 (MTARSIKLFFAR) are Cytoplasmic-facing. Residues 13 to 32 (WKYLMFACCITYLLVIYAPI) traverse the membrane as a helical; Signal-anchor for type II membrane protein segment. The Lumenal portion of the chain corresponds to 33 to 433 (SKSEQKDWKE…GTLVDSIPLD (401 aa)). Residues N194 and N359 are each glycosylated (N-linked (GlcNAc...) asparagine).

The protein belongs to the glycosyltransferase 10 family. The cofactor is Mg(2+). Mn(2+) is required as a cofactor. N-glycosylated. Glycosylation is important for enzymatic activity. As to expression, expressed in the pharyngeal-intestinal (PI) and anal valves. Expressed in ASG neurons and in one or two neurons in the retrovesicular ganglion and two neurons posterior to the PI valve and PHA and PHB neurons in the tail.

It is found in the golgi apparatus. The protein resides in the golgi stack membrane. The enzyme catalyses N(4)-{beta-D-GlcNAc-(1-&gt;2)-alpha-D-Man-(1-&gt;3)-[beta-D-GlcNAc-(1-&gt;2)-alpha-D-Man-(1-&gt;6)]-beta-D-Man-(1-&gt;4)-beta-D-GlcNAc-(1-&gt;4)-beta-D-GlcNAc}-L-asparaginyl-[protein] + GDP-beta-L-fucose = N(4)-{beta-D-GlcNAc-(1-&gt;2)-alpha-D-Man-(1-&gt;3)-[beta-D-GlcNAc-(1-&gt;2)-alpha-D-Man-(1-&gt;6)]-beta-D-Man-(1-&gt;4)-beta-D-GlcNAc-(1-&gt;4)-[alpha-L-Fuc(1-&gt;3)]-beta-D-GlcNAc}-L-asparaginyl-[protein] + GDP + H(+). The protein operates within protein modification; protein glycosylation. Inhibited by Cu(2+) or Zn(2+) and to a lesser extent Ni(2+) ions. Preferentially catalyzes the addition of fucose in alpha 1-3 linkage to the first GlcNAc residue (with or without alpha 1,6-linked fucose), next to the peptide chains in N-glycans. Unlike in mammals, does not require the prior action of N-acetylglucosaminyltransferase I to generate complex N-glycans. This Caenorhabditis elegans protein is Alpha-(1,3)-fucosyltransferase fut-1.